The following is a 196-amino-acid chain: MSAANMPTTTGAQGSGNQVPTTSTTIVNHFRELIKDPKNLDEASNYLFQTLLDDAVVGIFNETHHLRKSGNLAALDGVPEDSTYRMCEMPNLDIFGISTAKKPMDCTCPNCDRLVAAARFAPHLEKCMGMGRISSRIASRRLATKEGATSAHLHSAGNTGGTDDEDDVDWSSDKRRKKSNQNSRNNGSKKNNGKSF.

Positions 1–22 (MSAANMPTTTGAQGSGNQVPTT) are disordered. The SGF11-type zinc finger occupies 106–127 (CTCPNCDRLVAAARFAPHLEKC). Positions 144–196 (TKEGATSAHLHSAGNTGGTDDEDDVDWSSDKRRKKSNQNSRNNGSKKNNGKSF) are disordered. A Phosphoserine modification is found at Ser172. Low complexity predominate over residues 180–196 (NQNSRNNGSKKNNGKSF).

It belongs to the SGF11 family. As to quaternary structure, component of some SAGA transcription coactivator-HAT complexes, at least composed of Ada2b, not/nonstop, Pcaf/Gcn5, Sgf11 and Spt3. Within the SAGA complex, Sgf11, e(y)2, and not/nonstop form an additional subcomplex of SAGA called the DUB module (deubiquitination module). Interacts directly with not/nonstop. Interacts with the AMEX complex component xmas-2. Interacts with Cbp80; important for promoter recruitment of Sgf11 that is not associated with the DUB module.

The protein resides in the nucleus. The protein localises to the nucleoplasm. It is found in the cytoplasm. Functionally, component of the transcription regulatory histone acetylation (HAT) complex SAGA, a multiprotein complex that activates transcription by remodeling chromatin and mediating histone acetylation and deubiquitination. Within the SAGA complex, participates in a subcomplex that specifically deubiquitinates histone H2B. The SAGA complex is recruited to specific gene promoters by activators, where it is required for transcription. Required for nuclear receptor-mediated transactivation. Binds independently on SAGA to promoters in an RNA-dependent manner. Binds to mRNA and is essential for total mRNA export from the nucleus. Required to counteract heterochromatin silencing. Controls the development of neuronal connectivity in visual system by being required for accurate axon targeting in the optic lobe. Required for expression of ecdysone-induced genes such as br/broad. This Drosophila erecta (Fruit fly) protein is SAGA-associated factor 11 homolog.